The sequence spans 62 residues: Protein UL148D (62 aa).

The helical transmembrane segment at 30–50 threads the bilayer; the sequence is WWISVAIVIFIGVCLVALMYF.

It localises to the host membrane. In Human cytomegalovirus (strain Merlin) (HHV-5), this protein is Protein UL148D (UL148D).